The primary structure comprises 475 residues: ATP synthase subunit beta, chloroplastic (475 aa).

155 to 162 (GGAGVGKT) contacts ATP.

Belongs to the ATPase alpha/beta chains family. As to quaternary structure, F-type ATPases have 2 components, CF(1) - the catalytic core - and CF(0) - the membrane proton channel. CF(1) has five subunits: alpha(3), beta(3), gamma(1), delta(1), epsilon(1). CF(0) has four main subunits: a(1), b(1), b'(1) and c(9-12).

It localises to the plastid. The protein resides in the chloroplast thylakoid membrane. It carries out the reaction ATP + H2O + 4 H(+)(in) = ADP + phosphate + 5 H(+)(out). Its function is as follows. Produces ATP from ADP in the presence of a proton gradient across the membrane. The catalytic sites are hosted primarily by the beta subunits. This is ATP synthase subunit beta, chloroplastic from Porphyra purpurea (Red seaweed).